The primary structure comprises 159 residues: Ribose-5-phosphate isomerase B (159 aa).

Residues 8–9 (DH) and 67–71 (GSGNG) each bind D-ribulose 5-phosphate. Glutamate 72 (proton acceptor) is an active-site residue. Histidine 99 functions as the Proton donor in the catalytic mechanism. Asparagine 100, arginine 110, arginine 134, and arginine 138 together coordinate D-ribulose 5-phosphate.

It belongs to the LacAB/RpiB family. Homodimer.

It catalyses the reaction aldehydo-D-ribose 5-phosphate = D-ribulose 5-phosphate. It functions in the pathway carbohydrate degradation; pentose phosphate pathway; D-ribose 5-phosphate from D-ribulose 5-phosphate (non-oxidative stage): step 1/1. Its function is as follows. Catalyzes the interconversion of ribulose-5-P and ribose-5-P. The protein is Ribose-5-phosphate isomerase B of Mycolicibacterium paratuberculosis (strain ATCC BAA-968 / K-10) (Mycobacterium paratuberculosis).